We begin with the raw amino-acid sequence, 129 residues long: ATP synthase epsilon chain (129 aa).

The protein belongs to the ATPase epsilon chain family. In terms of assembly, F-type ATPases have 2 components, CF(1) - the catalytic core - and CF(0) - the membrane proton channel. CF(1) has five subunits: alpha(3), beta(3), gamma(1), delta(1), epsilon(1). CF(0) has three main subunits: a, b and c.

It localises to the cell inner membrane. Functionally, produces ATP from ADP in the presence of a proton gradient across the membrane. This Campylobacter jejuni subsp. jejuni serotype O:6 (strain 81116 / NCTC 11828) protein is ATP synthase epsilon chain.